Here is a 420-residue protein sequence, read N- to C-terminus: Interleukin-5 receptor subunit alpha (420 aa).

Positions 1-20 are cleaved as a signal peptide; the sequence is MIIVAHVLLILLGATEILQA. Residues 21–342 lie on the Extracellular side of the membrane; sequence DLLPDEKISL…NDEHKPLREW (322 aa). In terms of domain architecture, Fibronectin type-III 1 spans 32–123; that stretch reads PPVNFTIKVT…ASAELHAPPG (92 aa). 2 N-linked (GlcNAc...) asparagine glycosylation sites follow: Asn35 and Asn131. 2 disulfides stabilise this stretch: Cys134/Cys155 and Cys182/Cys196. Residues Asn216 and Asn244 are each glycosylated (N-linked (GlcNAc...) asparagine). Residues 241–334 form the Fibronectin type-III 2 domain; that stretch reads PPLNVTAEIE…WSQPIYVGND (94 aa). Cys269 and Cys316 form a disulfide bridge. Positions 322–326 match the WSXWS motif motif; sequence WSEWS. A helical transmembrane segment spans residues 343–362; sequence FVIVIMATICFILLILSLIC. Topologically, residues 363–420 are cytoplasmic; that stretch reads KICHLWIKLFPPIPAPKSNIKDLFVTTNYEKAGSSETEIEVICYIEKPGVETLEDSVF. Positions 371-379 match the Box 1 motif motif; the sequence is LFPPIPAPK.

This sequence belongs to the type I cytokine receptor family. Type 5 subfamily. As to quaternary structure, interacts with IL5. Interacts with CSF2RB. Interacts with JAK2. Interacts with SDCBP. Expressed on eosinophils and basophils.

The protein localises to the membrane. Its function is as follows. Cell surface receptor that plays an important role in the survival, differentiation, and chemotaxis of eosinophils. Acts by forming a heterodimeric receptor with CSF2RB subunit and subsequently binding to interleukin-5. In unstimulated conditions, interacts constitutively with JAK2. Heterodimeric receptor activation leads to JAK2 stimulation and subsequent activation of the JAK-STAT pathway. The polypeptide is Interleukin-5 receptor subunit alpha (IL5RA) (Homo sapiens (Human)).